The sequence spans 358 residues: Membrane-bound lytic murein transglycosylase C (358 aa).

The N-terminal stretch at 1–16 (MKKILALLVIAPLLVS) is a signal peptide. The N-palmitoyl cysteine moiety is linked to residue Cys-17. A lipid anchor (S-diacylglycerol cysteine) is attached at Cys-17.

Belongs to the transglycosylase Slt family.

It is found in the cell outer membrane. The catalysed reaction is Exolytic cleavage of the (1-&gt;4)-beta-glycosidic linkage between N-acetylmuramic acid (MurNAc) and N-acetylglucosamine (GlcNAc) residues in peptidoglycan, from either the reducing or the non-reducing ends of the peptidoglycan chains, with concomitant formation of a 1,6-anhydrobond in the MurNAc residue.. Its function is as follows. Murein-degrading enzyme. May play a role in recycling of muropeptides during cell elongation and/or cell division. The protein is Membrane-bound lytic murein transglycosylase C of Yersinia enterocolitica serotype O:8 / biotype 1B (strain NCTC 13174 / 8081).